The primary structure comprises 48 residues: Fimbrial assembly protein, serogroup F1 (48 aa).

This chain is Fimbrial assembly protein, serogroup F1 (fimB), found in Dichelobacter nodosus (Bacteroides nodosus).